A 317-amino-acid polypeptide reads, in one-letter code: Probable RuBisCO transcriptional regulator (317 aa).

The region spanning 6–63 is the HTH lysR-type domain; the sequence is FTLDQLRILKAIAKEGSFKKAANSLYVSQPAISLQIQNLERQLNVALFERGNKKATLT. The H-T-H motif DNA-binding region spans 23–42; sequence FKKAANSLYVSQPAISLQIQ.

This sequence belongs to the LysR transcriptional regulatory family.

It localises to the plastid. Its subcellular location is the chloroplast. In terms of biological role, trans-acting transcriptional regulator of RuBisCO genes (rbcL and rbcS) expression. This chain is Probable RuBisCO transcriptional regulator (rbcR), found in Porphyra purpurea (Red seaweed).